A 273-amino-acid chain; its full sequence is Dermonecrotic toxin SdSicTox-betaIIB1bxiv (273 aa).

The active site involves histidine 4. Mg(2+) contacts are provided by glutamate 24 and aspartate 26. Histidine 40 acts as the Nucleophile in catalysis. 2 disulfide bridges follow: cysteine 44-cysteine 50 and cysteine 46-cysteine 189. Residue aspartate 84 coordinates Mg(2+).

This sequence belongs to the arthropod phospholipase D family. Class II subfamily. Mg(2+) serves as cofactor. In terms of tissue distribution, expressed by the venom gland.

It localises to the secreted. It catalyses the reaction an N-(acyl)-sphingosylphosphocholine = an N-(acyl)-sphingosyl-1,3-cyclic phosphate + choline. It carries out the reaction an N-(acyl)-sphingosylphosphoethanolamine = an N-(acyl)-sphingosyl-1,3-cyclic phosphate + ethanolamine. The enzyme catalyses a 1-acyl-sn-glycero-3-phosphocholine = a 1-acyl-sn-glycero-2,3-cyclic phosphate + choline. The catalysed reaction is a 1-acyl-sn-glycero-3-phosphoethanolamine = a 1-acyl-sn-glycero-2,3-cyclic phosphate + ethanolamine. Its function is as follows. Dermonecrotic toxins cleave the phosphodiester linkage between the phosphate and headgroup of certain phospholipids (sphingolipid and lysolipid substrates), forming an alcohol (often choline) and a cyclic phosphate. This toxin acts on sphingomyelin (SM). It may also act on ceramide phosphoethanolamine (CPE), lysophosphatidylcholine (LPC) and lysophosphatidylethanolamine (LPE), but not on lysophosphatidylserine (LPS), and lysophosphatidylglycerol (LPG). It acts by transphosphatidylation, releasing exclusively cyclic phosphate products as second products. Induces dermonecrosis, hemolysis, increased vascular permeability, edema, inflammatory response, and platelet aggregation. The protein is Dermonecrotic toxin SdSicTox-betaIIB1bxiv of Sicarius cf. damarensis (strain GJB-2008) (Six-eyed sand spider).